The primary structure comprises 257 residues: Adenylate kinase (257 aa).

52–57 (GAGKGT) serves as a coordination point for ATP. The segment at 72–101 (ATGDMLRSQVAKKTELGKEAKKIMDQGGLV) is NMP. AMP is bound by residues Thr73, Arg78, 99 to 101 (GLV), 128 to 131 (GFPR), and Gln135. Residues 169–206 (GRLVHPASGRSYHKIFNPPKNDMKDDVTGEPLIQRSDD) are LID. ATP contacts are provided by residues Arg170 and 179–180 (SY). AMP is bound by residues Arg203 and Arg214. Gln242 provides a ligand contact to ATP.

It belongs to the adenylate kinase family. AK2 subfamily. In terms of assembly, monomer.

It localises to the cytoplasm. It is found in the cytosol. The protein localises to the mitochondrion intermembrane space. It catalyses the reaction AMP + ATP = 2 ADP. Catalyzes the reversible transfer of the terminal phosphate group between ATP and AMP. Plays an important role in cellular energy homeostasis and in adenine nucleotide metabolism. Adenylate kinase activity is critical for regulation of the phosphate utilization and the AMP de novo biosynthesis pathways. The polypeptide is Adenylate kinase (adk1) (Aspergillus fumigatus (strain CBS 144.89 / FGSC A1163 / CEA10) (Neosartorya fumigata)).